Reading from the N-terminus, the 652-residue chain is Chaperone protein HtpG (652 aa).

The tract at residues 1–348 (MATDAHKETL…SDDLPLNVSR (348 aa)) is a; substrate-binding. Residues 349-565 (ELLQHNPLLD…EYDFGMGMQR (217 aa)) form a b region. Positions 566–652 (LLKAAGHAMP…EAKSNAARGD (87 aa)) are c.

Belongs to the heat shock protein 90 family. In terms of assembly, homodimer.

It localises to the cytoplasm. Its function is as follows. Molecular chaperone. Has ATPase activity. This is Chaperone protein HtpG from Alkalilimnicola ehrlichii (strain ATCC BAA-1101 / DSM 17681 / MLHE-1).